We begin with the raw amino-acid sequence, 295 residues long: Protein FAM221A (295 aa).

A disordered region spans residues 244–295 (SEPPGIDKQVSSMRLSEEDDMAYFERRYQERLRKEKEHKRQKNSKPPTTQRP). A compositionally biased stretch (basic and acidic residues) spans 266-278 (YFERRYQERLRKE).

It belongs to the FAM221 family.

The polypeptide is Protein FAM221A (fam221a) (Xenopus laevis (African clawed frog)).